A 406-amino-acid chain; its full sequence is Arginine deiminase (406 aa).

The Amidino-cysteine intermediate role is filled by C396.

It belongs to the arginine deiminase family.

Its subcellular location is the cytoplasm. The enzyme catalyses L-arginine + H2O = L-citrulline + NH4(+). The protein operates within amino-acid degradation; L-arginine degradation via ADI pathway; carbamoyl phosphate from L-arginine: step 1/2. This Aliivibrio fischeri (strain ATCC 700601 / ES114) (Vibrio fischeri) protein is Arginine deiminase.